The following is a 545-amino-acid chain: Phenylalanine--tRNA ligase beta subunit (545 aa).

Residues 268 to 343 form the B5 domain; sequence FLHKIQNVRE…MSIGYNNLEP (76 aa). Mg(2+) is bound by residues Asp321, Asp327, Glu330, and Asp331.

The protein belongs to the phenylalanyl-tRNA synthetase beta subunit family. Type 2 subfamily. Tetramer of two alpha and two beta subunits. The cofactor is Mg(2+).

The protein localises to the cytoplasm. It carries out the reaction tRNA(Phe) + L-phenylalanine + ATP = L-phenylalanyl-tRNA(Phe) + AMP + diphosphate + H(+). The chain is Phenylalanine--tRNA ligase beta subunit from Saccharolobus islandicus (strain L.S.2.15 / Lassen #1) (Sulfolobus islandicus).